The sequence spans 258 residues: MKKTATPKLRLLLSNDDGVYAKGLAILAKTLADLGEVDVVAPDRNRSGASNSLTLNAPLHIKNLENGMISVEGTPTDCVHLAITGVLPEMPDMVVAGINAGPNLGDDVWYSGTVAAAMEGRFLGLPALAVSLGGELFRYYETAAKVVYQLIQRIEKDSLPPSTILNINVPDLPYEELKGFEVTRLGTRHRAEPTIRQIDPRGHPIYWVGAAGPEQDSGPGTDFFAMNHHCVSITPLRVDLTHYEAFDQLASWVKRLEM.

A divalent metal cation is bound by residues aspartate 16, aspartate 17, serine 47, and asparagine 99.

It belongs to the SurE nucleotidase family. A divalent metal cation serves as cofactor.

The protein resides in the cytoplasm. The catalysed reaction is a ribonucleoside 5'-phosphate + H2O = a ribonucleoside + phosphate. In terms of biological role, nucleotidase that shows phosphatase activity on nucleoside 5'-monophosphates. This is 5'-nucleotidase SurE from Coxiella burnetii (strain Dugway 5J108-111).